A 270-amino-acid chain; its full sequence is NAD(P)H-hydrate epimerase (270 aa).

In terms of domain architecture, YjeF N-terminal spans 25–234; the sequence is FQQLMDLMQN…DLLAPEAIYQ (210 aa). 73–77 provides a ligand contact to (6S)-NADPHX; sequence DNGGQ. K(+) is bound by residues Asn74 and Asp144. Residues 148 to 154 and Glu177 each bind (6S)-NADPHX; that span reads GVGLYGH. Thr180 provides a ligand contact to K(+).

This sequence belongs to the NnrE/AIBP family. Requires K(+) as cofactor.

The enzyme catalyses (6R)-NADHX = (6S)-NADHX. It carries out the reaction (6R)-NADPHX = (6S)-NADPHX. Its function is as follows. Catalyzes the epimerization of the S- and R-forms of NAD(P)HX, a damaged form of NAD(P)H that is a result of enzymatic or heat-dependent hydration. This is a prerequisite for the S-specific NAD(P)H-hydrate dehydratase to allow the repair of both epimers of NAD(P)HX. The protein is NAD(P)H-hydrate epimerase of Legionella pneumophila (strain Corby).